Reading from the N-terminus, the 411-residue chain is Arginine deiminase (411 aa).

Cysteine 401 functions as the Amidino-cysteine intermediate in the catalytic mechanism.

This sequence belongs to the arginine deiminase family.

It localises to the cytoplasm. It catalyses the reaction L-arginine + H2O = L-citrulline + NH4(+). It functions in the pathway amino-acid degradation; L-arginine degradation via ADI pathway; carbamoyl phosphate from L-arginine: step 1/2. This is Arginine deiminase from Streptococcus equi subsp. equi (strain 4047).